A 374-amino-acid polypeptide reads, in one-letter code: tRNA-specific 2-thiouridylase MnmA (374 aa).

ATP contacts are provided by residues 10–17 (AMSGGVDS) and Leu-36. Catalysis depends on Cys-111, which acts as the Nucleophile. A disulfide bridge links Cys-111 with Cys-209. Gly-135 lines the ATP pocket. An interaction with tRNA region spans residues 159–161 (KDQ). The active-site Cysteine persulfide intermediate is Cys-209.

It belongs to the MnmA/TRMU family.

The protein localises to the cytoplasm. It carries out the reaction S-sulfanyl-L-cysteinyl-[protein] + uridine(34) in tRNA + AH2 + ATP = 2-thiouridine(34) in tRNA + L-cysteinyl-[protein] + A + AMP + diphosphate + H(+). Functionally, catalyzes the 2-thiolation of uridine at the wobble position (U34) of tRNA, leading to the formation of s(2)U34. The polypeptide is tRNA-specific 2-thiouridylase MnmA (Acidobacterium capsulatum (strain ATCC 51196 / DSM 11244 / BCRC 80197 / JCM 7670 / NBRC 15755 / NCIMB 13165 / 161)).